Reading from the N-terminus, the 322-residue chain is Deoxyhypusine hydroxylase (322 aa).

2 HEAT-like PBS-type repeats span residues 76 to 102 and 109 to 135; these read LKHE…VLAD and VRHE…YFKE. Residues His78, Glu79, His111, Glu112, His236, Glu237, His269, and Glu270 each coordinate Fe cation. The HEAT-like PBS-type 3 repeat unit spans residues 267–293; it reads VRHEAAEALGSIATDDVLPVLKEHLKD.

It belongs to the deoxyhypusine hydroxylase family. The cofactor is Fe(2+).

Its subcellular location is the cytoplasm. The protein localises to the nucleus. The enzyme catalyses [eIF5A protein]-deoxyhypusine + AH2 + O2 = [eIF5A protein]-hypusine + A + H2O. It functions in the pathway protein modification; eIF5A hypusination. Its function is as follows. Catalyzes the hydroxylation of the N(6)-(4-aminobutyl)-L-lysine intermediate to form hypusine, an essential post-translational modification only found in mature eIF-5A factor. In Kluyveromyces lactis (strain ATCC 8585 / CBS 2359 / DSM 70799 / NBRC 1267 / NRRL Y-1140 / WM37) (Yeast), this protein is Deoxyhypusine hydroxylase.